The sequence spans 228 residues: Heptaprenylglyceryl phosphate synthase (228 aa).

Lysine 12 is a sn-glycerol 1-phosphate binding site. Positions 14 and 40 each coordinate Mg(2+). Sn-glycerol 1-phosphate is bound by residues tyrosine 158 to glycine 163, glycine 188, and glycine 208 to asparagine 209.

This sequence belongs to the GGGP/HepGP synthase family. Group I subfamily. In terms of assembly, homodimer. It depends on Mg(2+) as a cofactor.

It catalyses the reaction sn-glycerol 1-phosphate + all-trans-heptaprenyl diphosphate = 3-heptaprenyl-sn-glycero-1-phosphate + diphosphate. It functions in the pathway membrane lipid metabolism; glycerophospholipid metabolism. In terms of biological role, prenyltransferase that catalyzes in vivo the transfer of the heptaprenyl moiety of heptaprenyl pyrophosphate (HepPP; 35 carbon atoms) to the C3 hydroxyl of sn-glycerol-1-phosphate (G1P), producing heptaprenylglyceryl phosphate (HepGP). This reaction is an ether-bond-formation step in the biosynthesis of archaea-type G1P-based membrane lipids found in Bacillales. To a much lesser extent, is also able to use geranyl diphosphate (GPP; C10) and geranylgeranyl diphosphate (GGPP; C20) as the prenyl donors, but not farnesyl pyrophosphate (FPP; C15). Cannot use glycerol-3-phosphate (G3P) or 3-phosphoglycerate (3PG) as an acceptor. The sequence is that of Heptaprenylglyceryl phosphate synthase from Bacillus subtilis (strain 168).